We begin with the raw amino-acid sequence, 979 residues long: Pro-apoptotic serine protease NMA111 (979 aa).

Positions 1 to 20 (MTIMNEGKKRSHSSSSDDHL) are disordered. A serine protease region spans residues 65-255 (VVSIHFAQVA…LPLDRILRAL (191 aa)). Catalysis depends on charge relay system residues His-103, Asp-134, and Ser-217. PDZ domains are found at residues 273–361 (WLLK…RGGT) and 750–836 (SILH…VRDG).

It belongs to the peptidase S1C family.

Its subcellular location is the nucleus. Its function is as follows. Nuclear serine protease which mediates apoptosis. The sequence is that of Pro-apoptotic serine protease NMA111 (NMA111) from Candida glabrata (strain ATCC 2001 / BCRC 20586 / JCM 3761 / NBRC 0622 / NRRL Y-65 / CBS 138) (Yeast).